Here is an 80-residue protein sequence, read N- to C-terminus: MKTGIKKVKLHVKKNDSVVVISGNDKGKEGKILKVFPIKSRVIVEGVNIRKRHMRPTQGQTQGSIIEREFPIHSSNVKKS.

A disordered region spans residues 53 to 80 (HMRPTQGQTQGSIIEREFPIHSSNVKKS).

Belongs to the universal ribosomal protein uL24 family. Part of the 50S ribosomal subunit.

Its function is as follows. One of two assembly initiator proteins, it binds directly to the 5'-end of the 23S rRNA, where it nucleates assembly of the 50S subunit. In terms of biological role, one of the proteins that surrounds the polypeptide exit tunnel on the outside of the subunit. This is Large ribosomal subunit protein uL24 from Pelodictyon phaeoclathratiforme (strain DSM 5477 / BU-1).